The following is a 453-amino-acid chain: Ubiquitin-associated protein 1 (453 aa).

The UMA domain occupies 19–65 (LDDVPFKLNEKFRCPSKVGLPIGFCLSDCNAILSDLQYDFNLERRTV). Basic and acidic residues predominate over residues 83 to 93 (EAIRTDSESER). 3 disordered regions span residues 83-119 (EAIR…QDIV), 189-223 (LQSQ…AKTG), and 260-335 (FPKL…AGTT). A compositionally biased stretch (low complexity) spans 189 to 199 (LQSQPQSSVSP). Residues 285 to 328 (NLSNGTPPSLQRTASNNNTTLPQEQPVFAQNGTPKQSNPVTVTS) show a composition bias toward polar residues. UBA domains follow at residues 340–381 (SPSE…LFTH) and 403–449 (GSEE…LMTR).

In terms of assembly, component of an ESCRT-I complex (endosomal sorting complex required for transport I).

Its subcellular location is the cytoplasm. The protein localises to the cytosol. It localises to the endosome. Its function is as follows. Component of the ESCRT-I complex, a regulator of vesicular trafficking process. Binds to ubiquitinated cargo proteins and is required for the sorting of endocytic ubiquitinated cargos into multivesicular bodies (MVBs). The sequence is that of Ubiquitin-associated protein 1 from Danio rerio (Zebrafish).